A 367-amino-acid chain; its full sequence is Peptide chain release factor 2 (367 aa).

Gln-254 carries the post-translational modification N5-methylglutamine.

Belongs to the prokaryotic/mitochondrial release factor family. In terms of processing, methylated by PrmC. Methylation increases the termination efficiency of RF2.

The protein resides in the cytoplasm. Peptide chain release factor 2 directs the termination of translation in response to the peptide chain termination codons UGA and UAA. This chain is Peptide chain release factor 2, found in Burkholderia cenocepacia (strain ATCC BAA-245 / DSM 16553 / LMG 16656 / NCTC 13227 / J2315 / CF5610) (Burkholderia cepacia (strain J2315)).